The primary structure comprises 62 residues: Large ribosomal subunit protein eL37 (62 aa).

Residues C20, C23, C35, and C38 each contribute to the Zn(2+) site. Residues C20–C38 form a C4-type zinc finger.

It belongs to the eukaryotic ribosomal protein eL37 family. Requires Zn(2+) as cofactor.

In terms of biological role, binds to the 23S rRNA. The protein is Large ribosomal subunit protein eL37 (rpl37e) of Pyrococcus abyssi (strain GE5 / Orsay).